The sequence spans 1377 residues: Zinc finger MYM-type protein 2 (1377 aa).

Glycyl lysine isopeptide (Lys-Gly) (interchain with G-Cter in SUMO2) cross-links involve residues Lys48, Lys88, Lys98, and Lys104. Polar residues-rich tracts occupy residues 85–115 (TSSKNEELQGNDSKITPSSKELASQKGSVSE) and 127–138 (TNQGQEKNSSNF). A disordered region spans residues 85–177 (TSSKNEELQG…GMGNSGITTE (93 aa)). Basic and acidic residues predominate over residues 139-152 (IERRPPETKNRTND). A Glycyl lysine isopeptide (Lys-Gly) (interchain with G-Cter in SUMO2) cross-link involves residue Lys147. The segment covering 153 to 164 (VDFSTSSFSRSK) has biased composition (polar residues). Ser159 carries the post-translational modification Phosphoserine. Residues Lys253 and Lys297 each participate in a glycyl lysine isopeptide (Lys-Gly) (interchain with G-Cter in SUMO2) cross-link. The disordered stretch occupies residues 273–305 (NGESATHHNPDSWISQSASFPRNQKQPGVDSLS). Residues 284-298 (SWISQSASFPRNQKQ) are compositionally biased toward polar residues. Ser305 bears the Phosphoserine mark. Glycyl lysine isopeptide (Lys-Gly) (interchain with G-Cter in SUMO2) cross-links involve residues Lys312, Lys325, Lys348, and Lys366. The segment at 327–363 (VKVTCANCKKPLQKGQTAYQRKGSAHLFCSTTCLSSF) adopts an MYM-type 1 zinc-finger fold. The MYM-type 2 zinc-finger motif lies at 369 to 409 (PKKLCVMCKKDITTMKGTIVAQVDSSESFQEFCSTSCLSLY). Glycyl lysine isopeptide (Lys-Gly) (interchain with G-Cter in SUMO2) cross-links involve residues Lys417, Lys441, Lys491, Lys503, Lys513, Lys529, and Lys532. 2 MYM-type zinc fingers span residues 421–456 (NKSRCTICGKLTEIRHEVSFKNMTHKLCSDHCFNRY) and 463–502 (IMNCCEQCGEYLPSKGAGNNVLVIDGQQKRFCCQSCVSEY). The MYM-type 5 zinc finger occupies 533–570 (LTTCTGCRTQCRFFDMTQCIGPNGYMEPYCSTACMNSH). Residues Lys576, Lys603, Lys649, Lys658, Lys688, Lys700, and Lys709 each participate in a glycyl lysine isopeptide (Lys-Gly) (interchain with G-Cter in SUMO2) cross-link. The MYM-type 6 zinc-finger motif lies at 636–671 (QLKCNYCKNSFCSKPEILEWENKVHQFCSKTCSDDY). MYM-type zinc fingers lie at residues 723-758 (RCVTCNYCSQLCKKGATKELDGVVRDFCSEDCCKKF) and 764-799 (KAARCDCCKSQGTLKERVQWRGEMKHFCDQHCLLRF). Residues Lys764, Lys788, Lys812, and Lys829 each participate in a glycyl lysine isopeptide (Lys-Gly) (interchain with G-Cter in SUMO2) cross-link. Ser838 and Ser958 each carry phosphoserine. Disordered regions lie at residues 983–1002 (LLKNSDPETQSSMPDVPYEP) and 1028–1064 (VFGEEYEEQPRPRSKKKGAKRKAVSGYQSHDDSSDNS). Residues 1039–1050 (PRSKKKGAKRKA) are compositionally biased toward basic residues. Phosphoserine is present on Ser1064. Residue Thr1376 is modified to Phosphothreonine.

May be a component of a BHC histone deacetylase complex that contains HDAC1, HDAC2, HMG20B/BRAF35, KDM1A, RCOR1/CoREST, PHF21A/BHC80, ZNF198, ZNF217, ZMYM3, GSE1 and GTF2I.

It localises to the nucleus. Its function is as follows. May function as a transcription factor. In Pongo abelii (Sumatran orangutan), this protein is Zinc finger MYM-type protein 2 (ZMYM2).